We begin with the raw amino-acid sequence, 759 residues long: 1,4-alpha-glucan branching enzyme GlgB (759 aa).

The segment at 1 to 21 is disordered; it reads MAKTKGLPKDTAVTPSPHLRP. D422 functions as the Nucleophile in the catalytic mechanism. E475 (proton donor) is an active-site residue.

Belongs to the glycosyl hydrolase 13 family. GlgB subfamily. Monomer.

It catalyses the reaction Transfers a segment of a (1-&gt;4)-alpha-D-glucan chain to a primary hydroxy group in a similar glucan chain.. It participates in glycan biosynthesis; glycogen biosynthesis. Catalyzes the formation of the alpha-1,6-glucosidic linkages in glycogen by scission of a 1,4-alpha-linked oligosaccharide from growing alpha-1,4-glucan chains and the subsequent attachment of the oligosaccharide to the alpha-1,6 position. This Mycobacterium sp. (strain JLS) protein is 1,4-alpha-glucan branching enzyme GlgB.